The primary structure comprises 195 residues: dITP/XTP pyrophosphatase (195 aa).

8–13 provides a ligand contact to substrate; it reads TNNQGK. The Mg(2+) site is built by E39 and D68. D68 acts as the Proton acceptor in catalysis. Substrate-binding positions include S69, 149–152, K172, and 177–178; these read FGYD and HR.

The protein belongs to the HAM1 NTPase family. Homodimer. The cofactor is Mg(2+).

It carries out the reaction XTP + H2O = XMP + diphosphate + H(+). The catalysed reaction is dITP + H2O = dIMP + diphosphate + H(+). The enzyme catalyses ITP + H2O = IMP + diphosphate + H(+). Pyrophosphatase that catalyzes the hydrolysis of nucleoside triphosphates to their monophosphate derivatives, with a high preference for the non-canonical purine nucleotides XTP (xanthosine triphosphate), dITP (deoxyinosine triphosphate) and ITP. Seems to function as a house-cleaning enzyme that removes non-canonical purine nucleotides from the nucleotide pool, thus preventing their incorporation into DNA/RNA and avoiding chromosomal lesions. In Staphylococcus epidermidis (strain ATCC 35984 / DSM 28319 / BCRC 17069 / CCUG 31568 / BM 3577 / RP62A), this protein is dITP/XTP pyrophosphatase.